Reading from the N-terminus, the 537-residue chain is Tegument protein BRRF2 (537 aa).

4 disordered regions span residues Arg321–Pro366, Ala378–Pro398, Ser414–Phe466, and Gly486–Val537. Polar residues predominate over residues Glu334 to Asn347. Positions Ser423–Gly441 are enriched in low complexity. Acidic residues predominate over residues Asp492 to Glu517.

It belongs to the lymphocryptovirus BRRF2 family.

Its subcellular location is the virion tegument. The sequence is that of Tegument protein BRRF2 from Homo sapiens (Human).